Reading from the N-terminus, the 777-residue chain is uncharacterized protein (777 aa).

Disordered regions lie at residues 1–101 (MNNN…NLSN), 128–150 (SYNNNNNNNNNNKNNNNNINDDN), 219–267 (HHIH…NNMN), 334–366 (SLPFSSLSDNNGDDDDDGIDDGIDDGIDDGIDD), 391–466 (ISNS…ATIS), 529–577 (KNLN…NNKG), 590–622 (LAQEPNDEQNKTKKELEEVKEEEEEEEEEISTI), and 713–751 (EKQGGDDPEDSSDSDSDSDSNSNSDSSDLGNITVRKWKP). Low complexity-rich tracts occupy residues 128–147 (SYNNNNNNNNNNKNNNNNIN) and 243–265 (NNNNNNNNNNNNNNNNNINNHNN). The segment covering 334–343 (SLPFSSLSDN) has biased composition (polar residues). Residues 344–366 (NGDDDDDGIDDGIDDGIDDGIDD) are compositionally biased toward acidic residues. Over residues 391-407 (ISNSFHQNQSPCNNSFK) the composition is skewed to polar residues. Composition is skewed to low complexity over residues 408-466 (NNNN…ATIS) and 532-574 (NNNN…NNKN). Positions 597–606 (EQNKTKKELE) are enriched in basic and acidic residues. Acidic residues-rich tracts occupy residues 607 to 620 (EVKEEEEEEEEEIS) and 718 to 730 (DDPEDSSDSDSDS). Low complexity predominate over residues 731 to 740 (DSNSNSDSSD).

This is an uncharacterized protein from Dictyostelium discoideum (Social amoeba).